The following is a 343-amino-acid chain: 3-dehydroquinate synthase (343 aa).

NAD(+)-binding positions include 61–66, 95–99, 119–120, lysine 132, lysine 141, and 159–162; these read SGEKYK, GVISD, TT, and FLKT. Residues glutamate 174, histidine 231, and histidine 248 each contribute to the Zn(2+) site.

It belongs to the sugar phosphate cyclases superfamily. Dehydroquinate synthase family. It depends on Co(2+) as a cofactor. Zn(2+) serves as cofactor. The cofactor is NAD(+).

It is found in the cytoplasm. The enzyme catalyses 7-phospho-2-dehydro-3-deoxy-D-arabino-heptonate = 3-dehydroquinate + phosphate. The protein operates within metabolic intermediate biosynthesis; chorismate biosynthesis; chorismate from D-erythrose 4-phosphate and phosphoenolpyruvate: step 2/7. Its function is as follows. Catalyzes the conversion of 3-deoxy-D-arabino-heptulosonate 7-phosphate (DAHP) to dehydroquinate (DHQ). The sequence is that of 3-dehydroquinate synthase from Helicobacter pylori (strain HPAG1).